Here is a 339-residue protein sequence, read N- to C-terminus: Probable cytosolic iron-sulfur protein assembly protein CIAO1 (339 aa).

7 WD repeats span residues 14-53 (HPDSRCWFLAWNPTGTLLASCGGDRKIRIWGTEGDSWICK), 59-98 (GHQRTVRKVAWSPCGNYLASASFDATTCIWKKNQDDFECV), 103-142 (GHENEVKSVAWAPSGNLLATCSRDKSVWVWEVDEEDEYEC), 148-187 (SHTQDVKHVVWHPSQELLASASYDDTVKLYQEEGDDWVCC), 192-231 (GHESTVWSIAFDPSGQRLASCSDDRTVRIWRQYLPGNEQG), 250-289 (FHTRTIYDVAWCQLTGALATACGDDAIRVFEEDPGSDPQQ), and 301-339 (AHSQDVNCVAWNPKEAGLLASCSDDGEVAFWEYHQPAGL). The short motif at 176–178 (LYQ) is the LYR motif; required for interaction with HSC20 element.

The protein belongs to the WD repeat CIA1 family. Component of the CIA complex. Interacts with CIAO2A and forms a complex with CIAO2B and MMS19; the interactions with CIAO2A and CIAO2B are mutually exclusive. Interacts with CHD1L, ERCC2, IREB2 and POLD1. Component of the MMXD complex, which includes CIAO1, ERCC2, CIAO2B, MMS19 and SLC25A5. Interacts with WT1. Interacts with CIAO3. Interacts (via LYR motif) with HSC20.

The protein resides in the cytoplasm. Its function is as follows. Key component of the cytosolic iron-sulfur protein assembly (CIA) complex, a multiprotein complex that mediates the incorporation of iron-sulfur cluster into extramitochondrial Fe/S proteins. As a CIA complex component, interacts specifically with CIAO2A or CIAO2B and MMS19 to assist different branches of iron-sulfur protein assembly, depending of its interactors. The complex CIAO1:CIAO2B:MMS19 binds to and facilitates the assembly of most cytosolic-nuclear Fe/S proteins. CIAO1:CIAO2A specifically matures ACO1 and stabilizes IREB2. Seems to specifically modulate the transactivation activity of WT1. As part of the mitotic spindle-associated MMXD complex it may play a role in chromosome segregation. The polypeptide is Probable cytosolic iron-sulfur protein assembly protein CIAO1 (Rattus norvegicus (Rat)).